The primary structure comprises 224 residues: 7-cyano-7-deazaguanine synthase 1 (224 aa).

10 to 20 provides a ligand contact to ATP; the sequence is LSGGLDSMVCA. 4 residues coordinate Zn(2+): C189, C199, C202, and C205.

Belongs to the QueC family. It depends on Zn(2+) as a cofactor.

The catalysed reaction is 7-carboxy-7-deazaguanine + NH4(+) + ATP = 7-cyano-7-deazaguanine + ADP + phosphate + H2O + H(+). Its pathway is purine metabolism; 7-cyano-7-deazaguanine biosynthesis. Its function is as follows. Catalyzes the ATP-dependent conversion of 7-carboxy-7-deazaguanine (CDG) to 7-cyano-7-deazaguanine (preQ(0)). The sequence is that of 7-cyano-7-deazaguanine synthase 1 from Sphingopyxis alaskensis (strain DSM 13593 / LMG 18877 / RB2256) (Sphingomonas alaskensis).